The chain runs to 91 residues: Parbolysin P6 (91 aa).

Disulfide bonds link Cys-16-Cys-37, Cys-22-Cys-33, and Cys-47-Cys-60.

Belongs to the worm cytolysin family. Localized within the skin and proboscis and are most readily isolated from body mucus secretions.

It localises to the secreted. Functionally, cytolysin that shows hemolytic activity (on bovine erythrocytes, HC(50)=5.75 mg/ml). This hemolytic activity is completely inhibited by small unilamelar vesicles composed of PC/PG, PC/PI and PC/PS in 1:1 molar ratios (with at least 100 mg/ml concentration). In Parborlasia corrugatus (Antarctic nemertean worm), this protein is Parbolysin P6.